We begin with the raw amino-acid sequence, 580 residues long: FAD-dependent monooxygenase yanF (580 aa).

The segment at 1-21 (MSSSAECRPIGWGGWGPDPNT) is disordered. An FAD-binding PCMH-type domain is found at 150 to 322 (CRLNASCIVT…VEYDLTTNTG (173 aa)). His-187 bears the Pros-8alpha-FAD histidine mark.

The protein belongs to the oxygen-dependent FAD-linked oxidoreductase family.

It functions in the pathway secondary metabolite biosynthesis; terpenoid biosynthesis. FAD-dependent monooxygenase; part of the gene cluster that mediates the biosynthesis of yanuthone D, a fungal isoprenoid epoxycyclohexenone that acts as an antibiotic against fungi and bacteria. The first step of the pathway is the synthesis of 6-methylsalicylic acid (6-MSA) by the polyketide synthase yanA. 6-MSA is then converted to m-cresol by the decarboxylase yanB. The cytochrome P450 monooxygenase yanC then catalyzes the oxidation of m-cresol to toluquinol. Epoxidation of toluquinol is then performed by the short chain dehydrogenase yanD, with the help of yanE, and a further prenylated by yanG leads to 7-deacetoxyyanuthone A. The next step is the hydroxylation of C-22 of 7-deacetoxyyanuthone A by the cytochrome P450 monooxygenase yanH to yield 22-deacetylyanuthone A. O-Mevalon transferase yanI then attaches mevalon to the hydroxyl group of 22-deacetylyanuthone A to produce yanuthone E. Finally, the FAD-dependent monooxygenase yanF oxidizes the hydroxyl group at C15 of yanuthone E to form yanuthone D. Furthermore, several branching points in the pathway lead to the production of yanuthones F and G from 7-deacetoxyyanuthone A; yanuthones H and I from 22-deacetylyanuthone A; and yanuthone J from yanuthone E. This chain is FAD-dependent monooxygenase yanF, found in Aspergillus niger (strain ATCC 1015 / CBS 113.46 / FGSC A1144 / LSHB Ac4 / NCTC 3858a / NRRL 328 / USDA 3528.7).